We begin with the raw amino-acid sequence, 371 residues long: Transaldolase (371 aa).

Residue lysine 132 forms an Isoglutamyl lysine isopeptide (Lys-Gln) (interchain with Q-Cter in protein Pup) linkage. Residue lysine 142 is the Schiff-base intermediate with substrate of the active site.

The protein belongs to the transaldolase family. Type 2 subfamily.

It localises to the cytoplasm. It catalyses the reaction D-sedoheptulose 7-phosphate + D-glyceraldehyde 3-phosphate = D-erythrose 4-phosphate + beta-D-fructose 6-phosphate. Its pathway is carbohydrate degradation; pentose phosphate pathway; D-glyceraldehyde 3-phosphate and beta-D-fructose 6-phosphate from D-ribose 5-phosphate and D-xylulose 5-phosphate (non-oxidative stage): step 2/3. Its function is as follows. Transaldolase is important for the balance of metabolites in the pentose-phosphate pathway. This is Transaldolase (tal) from Mycolicibacterium smegmatis (strain ATCC 700084 / mc(2)155) (Mycobacterium smegmatis).